Consider the following 375-residue polypeptide: Chaperone protein DnaJ (375 aa).

The J domain maps to 5-70; the sequence is DYYEVLGVAR…NKRRAYDAHG (66 aa). The CR-type zinc-finger motif lies at 131-208; it reads GIERRIEIPT…CHGAGRVEED (78 aa). Zn(2+)-binding residues include Cys-144, Cys-147, Cys-160, Cys-163, Cys-182, Cys-185, Cys-196, and Cys-199. 4 CXXCXGXG motif repeats span residues 144–151, 160–167, 182–189, and 196–203; these read CAPCHGSG, CGTCHGRG, CPHCDGRG, and CKTCHGAG.

The protein belongs to the DnaJ family. Homodimer. The cofactor is Zn(2+).

Its subcellular location is the cytoplasm. Participates actively in the response to hyperosmotic and heat shock by preventing the aggregation of stress-denatured proteins and by disaggregating proteins, also in an autonomous, DnaK-independent fashion. Unfolded proteins bind initially to DnaJ; upon interaction with the DnaJ-bound protein, DnaK hydrolyzes its bound ATP, resulting in the formation of a stable complex. GrpE releases ADP from DnaK; ATP binding to DnaK triggers the release of the substrate protein, thus completing the reaction cycle. Several rounds of ATP-dependent interactions between DnaJ, DnaK and GrpE are required for fully efficient folding. Also involved, together with DnaK and GrpE, in the DNA replication of plasmids through activation of initiation proteins. This is Chaperone protein DnaJ from Xanthomonas axonopodis pv. citri (strain 306).